We begin with the raw amino-acid sequence, 285 residues long: Putative alkaline ceramidase dcd3B (285 aa).

Transmembrane regions (helical) follow at residues 34–54 (TFSS…MMSA), 77–97 (VLFS…YHAT), and 104–124 (LFDE…ILTI). Asparagine 131 is a glycosylation site (N-linked (GlcNAc...) asparagine). The next 4 membrane-spanning stretches (helical) occupy residues 141-161 (RFLP…ITII), 166-186 (IILQ…SYMY), 200-220 (PKKF…SWLT), and 236-256 (LHAV…QFFI).

The protein belongs to the alkaline ceramidase family.

The protein localises to the membrane. The chain is Putative alkaline ceramidase dcd3B (dcd3B) from Dictyostelium discoideum (Social amoeba).